A 424-amino-acid chain; its full sequence is CinA-like protein (424 aa).

Belongs to the CinA family.

The sequence is that of CinA-like protein from Shewanella frigidimarina (strain NCIMB 400).